The chain runs to 396 residues: Lipid-A-disaccharide synthase (396 aa).

It belongs to the LpxB family.

The catalysed reaction is a lipid X + a UDP-2-N,3-O-bis[(3R)-3-hydroxyacyl]-alpha-D-glucosamine = a lipid A disaccharide + UDP + H(+). Its pathway is bacterial outer membrane biogenesis; LPS lipid A biosynthesis. In terms of biological role, condensation of UDP-2,3-diacylglucosamine and 2,3-diacylglucosamine-1-phosphate to form lipid A disaccharide, a precursor of lipid A, a phosphorylated glycolipid that anchors the lipopolysaccharide to the outer membrane of the cell. The chain is Lipid-A-disaccharide synthase from Nitrobacter winogradskyi (strain ATCC 25391 / DSM 10237 / CIP 104748 / NCIMB 11846 / Nb-255).